We begin with the raw amino-acid sequence, 330 residues long: Inactive hydroxysteroid dehydrogenase-like protein 1 (330 aa).

N-acetylalanine is present on Ala2. The interval 2–82 (AAVDSFYLLY…SGATDGIGRA (81 aa)) is required for mitochondria translocation. Residues 74–80 (GATDGIG), Asp125, and Lys222 contribute to the NADP(+) site.

This sequence belongs to the short-chain dehydrogenases/reductases (SDR) family. 17-beta-HSD 3 subfamily. As to quaternary structure, interacts with STYXL1.

It is found in the mitochondrion. The sequence is that of Inactive hydroxysteroid dehydrogenase-like protein 1 (HSDL1) from Pongo abelii (Sumatran orangutan).